The primary structure comprises 399 residues: Stearoyl-[acyl-carrier-protein] 9-desaturase, chloroplastic (399 aa).

Polar residues predominate over residues 1–12 (MALNLNPVSTPF). A chloroplast-targeting transit peptide spans 1–35 (MALNLNPVSTPFQCRRLPSFSPRQTPSRRSPKFFM). Positions 1-57 (MALNLNPVSTPFQCRRLPSFSPRQTPSRRSPKFFMASTLSSSSPKEAESLKKPFSPP) are disordered. Residues glutamate 141, glutamate 179, histidine 182, glutamate 232, glutamate 265, and histidine 268 each coordinate Fe cation.

Belongs to the fatty acid desaturase type 2 family. Homodimer. The cofactor is Fe(2+).

It localises to the plastid. It is found in the chloroplast. It carries out the reaction octadecanoyl-[ACP] + 2 reduced [2Fe-2S]-[ferredoxin] + O2 + 2 H(+) = (9Z)-octadecenoyl-[ACP] + 2 oxidized [2Fe-2S]-[ferredoxin] + 2 H2O. It functions in the pathway lipid metabolism; fatty acid metabolism. Converts stearoyl-ACP to oleoyl-ACP by introduction of a cis double bond between carbons 9 and 10 of the acyl chain. The protein is Stearoyl-[acyl-carrier-protein] 9-desaturase, chloroplastic of Spinacia oleracea (Spinach).